The primary structure comprises 428 residues: Glutamyl-tRNA reductase (428 aa).

Residues 49-52, S107, 112-114, and Q118 contribute to the substrate site; these read TCNR and EPQ. Residue C50 is the Nucleophile of the active site. 187–192 is a binding site for NADP(+); sequence GAGETI.

It belongs to the glutamyl-tRNA reductase family. Homodimer.

The catalysed reaction is (S)-4-amino-5-oxopentanoate + tRNA(Glu) + NADP(+) = L-glutamyl-tRNA(Glu) + NADPH + H(+). Its pathway is porphyrin-containing compound metabolism; protoporphyrin-IX biosynthesis; 5-aminolevulinate from L-glutamyl-tRNA(Glu): step 1/2. Its function is as follows. Catalyzes the NADPH-dependent reduction of glutamyl-tRNA(Glu) to glutamate 1-semialdehyde (GSA). This is Glutamyl-tRNA reductase from Pseudomonas fluorescens (strain Pf0-1).